Consider the following 269-residue polypeptide: Ubiquinone/menaquinone biosynthesis C-methyltransferase UbiE (269 aa).

S-adenosyl-L-methionine-binding positions include threonine 92, aspartate 113, and 141–142 (NA).

The protein belongs to the class I-like SAM-binding methyltransferase superfamily. MenG/UbiE family.

It catalyses the reaction a 2-demethylmenaquinol + S-adenosyl-L-methionine = a menaquinol + S-adenosyl-L-homocysteine + H(+). The enzyme catalyses a 2-methoxy-6-(all-trans-polyprenyl)benzene-1,4-diol + S-adenosyl-L-methionine = a 5-methoxy-2-methyl-3-(all-trans-polyprenyl)benzene-1,4-diol + S-adenosyl-L-homocysteine + H(+). It participates in quinol/quinone metabolism; menaquinone biosynthesis; menaquinol from 1,4-dihydroxy-2-naphthoate: step 2/2. It functions in the pathway cofactor biosynthesis; ubiquinone biosynthesis. Methyltransferase required for the conversion of demethylmenaquinol (DMKH2) to menaquinol (MKH2) and the conversion of 2-polyprenyl-6-methoxy-1,4-benzoquinol (DDMQH2) to 2-polyprenyl-3-methyl-6-methoxy-1,4-benzoquinol (DMQH2). The polypeptide is Ubiquinone/menaquinone biosynthesis C-methyltransferase UbiE (Brucella suis biovar 1 (strain 1330)).